The following is a 350-amino-acid chain: Glycerol-1-phosphate dehydrogenase [NAD(P)+] (350 aa).

Residues 97-101 (GSIID) and 119-122 (TTAS) contribute to the NAD(+) site. Residue D124 participates in substrate binding. An NAD(+)-binding site is contributed by S128. D171 lines the substrate pocket. 2 residues coordinate Zn(2+): D171 and H251. Residue H255 participates in substrate binding. H267 is a Zn(2+) binding site.

It belongs to the glycerol-1-phosphate dehydrogenase family. It depends on Zn(2+) as a cofactor.

The protein localises to the cytoplasm. It carries out the reaction sn-glycerol 1-phosphate + NAD(+) = dihydroxyacetone phosphate + NADH + H(+). The enzyme catalyses sn-glycerol 1-phosphate + NADP(+) = dihydroxyacetone phosphate + NADPH + H(+). The protein operates within membrane lipid metabolism; glycerophospholipid metabolism. In terms of biological role, catalyzes the NAD(P)H-dependent reduction of dihydroxyacetonephosphate (DHAP or glycerone phosphate) to glycerol 1-phosphate (G1P). The G1P thus generated is used as the glycerophosphate backbone of phospholipids in the cellular membranes of Archaea. The protein is Glycerol-1-phosphate dehydrogenase [NAD(P)+] of Thermococcus sibiricus (strain DSM 12597 / MM 739).